We begin with the raw amino-acid sequence, 278 residues long: MCRRPDCGFSFSPGPVVLLWCCLLLPIVSSVAVSVAPTAAEKVPAECPELTRRCLLGEVFQGDKYESWLRPLVNVTGRNGPLSQLIRYRPVTPEAANSVLLDDAFLDTLALLYNNPDQLRALLTLLSSDTAPRWMTVMRGYSECGDGSPAVYTCVDDLCRGYDLTRLSYGRSIFTEHVLGFELVPPSLFNVVVAIRNEATRTNRAVRLPVSTAAAPEGITLFYGLYNAVKEFCLRHQLDPPLLRHLDKYYAGLPPELKQTRVNLPAHSRYGPQAVDAR.

Residues 1–30 form the signal peptide; sequence MCRRPDCGFSFSPGPVVLLWCCLLLPIVSS. The region spanning 43–256 is the gL betaherpesvirus-type domain; it reads VPAECPELTR…DKYYAGLPPE (214 aa). Cys-154 and Cys-159 are disulfide-bonded.

Belongs to the herpesviridae glycoprotein L (gL) family. Betaherpesvirinae gL subfamily. In terms of assembly, interacts with glycoprotein H (gH); this interaction is necessary for the correct processing and cell surface expression of gH. Forms the envelope pentamer complex (PC) composed of gH, gL, UL128, UL130, and UL131A. The pentamer interacts with host NRP2. Forms the envelope trimer complex composed of gH, gL, and gO. The trimer interacts with host PDGFRA. The trimer also interacts with host EPHA2.

It is found in the virion membrane. The protein resides in the host cell membrane. The protein localises to the host Golgi apparatus. Its subcellular location is the host trans-Golgi network. Its function is as follows. The heterodimer glycoprotein H-glycoprotein L is required for the fusion of viral and plasma membranes leading to virus entry into the host cell. Acts as a functional inhibitor of gH and maintains gH in an inhibited form. Upon binding to host integrins, gL dissociates from gH leading to activation of the viral fusion glycoproteins gB and gH. In human cytomegalovirus, forms two distincts complexes to mediate viral entry, a trimer and a pentamer at the surface of the virion envelope. The gH-gL-gO trimer is required for infection in fibroblasts by interacting with host PDGFRA, and in glioblastoma cells by interacting with host EPHA2. The gH-gL-UL128-UL130-UL131A pentamer is essential for viral entry in epithelial, endothelial and myeloid cells via interaction with host NRP2. The sequence is that of Envelope glycoprotein L from Human cytomegalovirus (strain 5040) (HHV-5).